The following is a 158-amino-acid chain: Snaclec coagulation factor X-activating enzyme light chain 2 (158 aa).

The first 23 residues, 1–23 (MGRSISVSFGLLAVFLSLSGTGA), serve as a signal peptide directing secretion. Disulfide bonds link Cys27–Cys38, Cys55–Cys152, and Cys127–Cys144. The C-type lectin domain occupies 34 to 153 (YRYFCYRVFK…CEEPYPFVCK (120 aa)).

This sequence belongs to the snaclec family. In terms of assembly, heterotrimer; disulfide-linked. The heterotrimer consists of 1 heavy chain (a metalloproteinase) and 2 light chains: LC1 and LC2. In terms of tissue distribution, expressed by the venom gland.

The protein localises to the secreted. In terms of biological role, regulatory subunit of the blood coagulation factor X-activating enzyme. Activates coagulation factor X (F10) by cleaving the Arg-Ile bond at position 234, activates coagulation factor IX (F9) by cleaving the Arg-Val bond at position 226 and is also able to activate protein C (PROC). May serve as an exosite by which the enzyme recognizes and binds to the Gla domain of factor X (F10) in a calcium-dependent manner. This Macrovipera lebetinus (Levantine viper) protein is Snaclec coagulation factor X-activating enzyme light chain 2 (LC2).